The chain runs to 448 residues: Trigger factor (448 aa).

The PPIase FKBP-type domain occupies Gly-172 to Pro-257.

The protein belongs to the FKBP-type PPIase family. Tig subfamily.

Its subcellular location is the cytoplasm. It carries out the reaction [protein]-peptidylproline (omega=180) = [protein]-peptidylproline (omega=0). Functionally, involved in protein export. Acts as a chaperone by maintaining the newly synthesized protein in an open conformation. Functions as a peptidyl-prolyl cis-trans isomerase. The protein is Trigger factor of Burkholderia multivorans (strain ATCC 17616 / 249).